Reading from the N-terminus, the 86-residue chain is Cytochrome c oxidase subunit 6B1 (86 aa).

Position 2 is an N-acetylalanine (A2). The region spanning 27–73 (TRNCWQNYLDFHRCEKAMTAKGGDVSVCEWYRRVYKSLCPISWVSTW) is the CHCH domain. Residues 30-40 (CWQNYLDFHRC) carry the Cx9C motif motif. 2 cysteine pairs are disulfide-bonded: C30–C65 and C40–C54. A Cx10C motif motif is present at residues 54–65 (CEWYRRVYKSLC). An N6-acetyllysine modification is found at K62.

It belongs to the cytochrome c oxidase subunit 6B family. As to quaternary structure, component of the cytochrome c oxidase (complex IV, CIV), a multisubunit enzyme composed of 14 subunits. The complex is composed of a catalytic core of 3 subunits MT-CO1, MT-CO2 and MT-CO3, encoded in the mitochondrial DNA, and 11 supernumerary subunits COX4I, COX5A, COX5B, COX6A, COX6B, COX6C, COX7A, COX7B, COX7C, COX8 and NDUFA4, which are encoded in the nuclear genome. The complex exists as a monomer or a dimer and forms supercomplexes (SCs) in the inner mitochondrial membrane with NADH-ubiquinone oxidoreductase (complex I, CI) and ubiquinol-cytochrome c oxidoreductase (cytochrome b-c1 complex, complex III, CIII), resulting in different assemblies (supercomplex SCI(1)III(2)IV(1) and megacomplex MCI(2)III(2)IV(2)).

It is found in the mitochondrion inner membrane. Its pathway is energy metabolism; oxidative phosphorylation. Component of the cytochrome c oxidase, the last enzyme in the mitochondrial electron transport chain which drives oxidative phosphorylation. The respiratory chain contains 3 multisubunit complexes succinate dehydrogenase (complex II, CII), ubiquinol-cytochrome c oxidoreductase (cytochrome b-c1 complex, complex III, CIII) and cytochrome c oxidase (complex IV, CIV), that cooperate to transfer electrons derived from NADH and succinate to molecular oxygen, creating an electrochemical gradient over the inner membrane that drives transmembrane transport and the ATP synthase. Cytochrome c oxidase is the component of the respiratory chain that catalyzes the reduction of oxygen to water. Electrons originating from reduced cytochrome c in the intermembrane space (IMS) are transferred via the dinuclear copper A center (CU(A)) of subunit 2 and heme A of subunit 1 to the active site in subunit 1, a binuclear center (BNC) formed by heme A3 and copper B (CU(B)). The BNC reduces molecular oxygen to 2 water molecules using 4 electrons from cytochrome c in the IMS and 4 protons from the mitochondrial matrix. The protein is Cytochrome c oxidase subunit 6B1 (COX6B1) of Carlito syrichta (Philippine tarsier).